The sequence spans 166 residues: MIKPQLAKKIETVSFLQEKISQAKTVIVFEYSNLPVSEFMKLRRQLKKIDCEVKVYPKNIMQRAFMNTNYQDLVSLLKGIKALIISQQELLEPIKVIYNFAKQNKVVKIVSGVVEQKIVSPQEINSLATLPSKEQMLALLSVAMLSPLRQLAFALKLLSEKQATNN.

Belongs to the universal ribosomal protein uL10 family. Part of the ribosomal stalk of the 50S ribosomal subunit. The N-terminus interacts with L11 and the large rRNA to form the base of the stalk. The C-terminus forms an elongated spine to which L12 dimers bind in a sequential fashion forming a multimeric L10(L12)X complex.

Forms part of the ribosomal stalk, playing a central role in the interaction of the ribosome with GTP-bound translation factors. The protein is Large ribosomal subunit protein uL10 of Phytoplasma australiense.